Consider the following 140-residue polypeptide: uncharacterized protein (140 aa).

The next 2 membrane-spanning stretches (helical) occupy residues 63-83 (LGFVHFSKWVELAWCFLTLAT) and 119-139 (ILLYLLICGVSLYGAIRIFIN).

It localises to the membrane. This is an uncharacterized protein from Schizosaccharomyces pombe (strain 972 / ATCC 24843) (Fission yeast).